We begin with the raw amino-acid sequence, 288 residues long: Executioner caspase (288 aa).

Cys-131 is a catalytic residue.

The protein belongs to the peptidase C14A family.

In terms of biological role, may induce host cell apoptosis and contribute of the establishment of a special cell cleavage process in which apoppotic bodies are rescued by the virus and differentiate to form large vesicles in which virion assembles. This is Executioner caspase from Spodoptera frugiperda ascovirus 1a (SfAV-1a).